Consider the following 417-residue polypeptide: Carbon catabolite repressor protein 4 homolog 4 (417 aa).

Residue Phe2 is modified to N-acetylserine. Glu143 contacts Mg(2+).

This sequence belongs to the CCR4/nocturin family. In terms of assembly, component of the CCR4-NOT complex, at least composed of CRR4 and CAF1 proteins. Forms homooligomers. It depends on Mg(2+) as a cofactor.

The protein localises to the nucleus. It localises to the cytoplasm. The catalysed reaction is Exonucleolytic cleavage of poly(A) to 5'-AMP.. Its function is as follows. Acts as a catalytic component of the CCR4-NOT core complex, which in the nucleus seems to be a general transcription factor, and in the cytoplasm the major mRNA deadenylase involved in mRNA turnover. Transcriptional regulator of circadian rhythms with poly(A)-degrading activity that affects the expression and rhythmicity of the clock core oscillator genes TOC1 and CCA1. Deadenylation may be a mechanism involved in the regulation of the circadian clock. May play a negative role in response against oxidative stress. Possesses magnesium-dependent poly(A)-specific exoribonuclease activity in vitro and is almost inactive with poly(U), poly(C) and poly(G) as substrates. This Arabidopsis thaliana (Mouse-ear cress) protein is Carbon catabolite repressor protein 4 homolog 4.